The chain runs to 92 residues: Small ribosomal subunit protein uS19c (92 aa).

This sequence belongs to the universal ribosomal protein uS19 family.

It localises to the plastid. Its subcellular location is the chloroplast. Functionally, protein S19 forms a complex with S13 that binds strongly to the 16S ribosomal RNA. The polypeptide is Small ribosomal subunit protein uS19c (Draba nemorosa (Woodland whitlowgrass)).